The following is a 1024-amino-acid chain: Beta-galactosidase (1024 aa).

The substrate site is built by N103 and D202. D202 contributes to the Na(+) binding site. The Mg(2+) site is built by E417, H419, and E462. Residues E462 and E538 to H541 each bind substrate. E462 (proton donor) is an active-site residue. The Nucleophile role is filled by E538. N598 contributes to the Mg(2+) binding site. The Na(+) site is built by F602 and N605. Substrate contacts are provided by N605 and W1000.

Belongs to the glycosyl hydrolase 2 family. As to quaternary structure, homotetramer. The cofactor is Mg(2+). Na(+) is required as a cofactor.

The catalysed reaction is Hydrolysis of terminal non-reducing beta-D-galactose residues in beta-D-galactosides.. This chain is Beta-galactosidase, found in Klebsiella pneumoniae.